Consider the following 257-residue polypeptide: UPF0246 protein Spea_1078 (257 aa).

The protein belongs to the UPF0246 family.

This is UPF0246 protein Spea_1078 from Shewanella pealeana (strain ATCC 700345 / ANG-SQ1).